The chain runs to 126 residues: Acidic phospholipase A2 S1E6-b (126 aa).

Positions 1–3 (VEG) are cleaved as a signal peptide. Cystine bridges form between Cys29–Cys119, Cys31–Cys47, Cys46–Cys98, Cys52–Cys126, Cys53–Cys91, Cys60–Cys84, and Cys78–Cys89. Ca(2+) contacts are provided by Tyr30, Gly32, and Gly34. His50 is a catalytic residue. Asp51 is a binding site for Ca(2+). The active site involves Asp92.

Homodimer. The cofactor is Ca(2+). As to expression, expressed by the venom gland.

It is found in the secreted. The catalysed reaction is a 1,2-diacyl-sn-glycero-3-phosphocholine + H2O = a 1-acyl-sn-glycero-3-phosphocholine + a fatty acid + H(+). Functionally, snake venom phospholipase that inhibits ADP-induced platelet aggregation. PLA2 catalyzes the calcium-dependent hydrolysis of the 2-acyl groups in 3-sn-phosphoglycerides. In Calloselasma rhodostoma (Malayan pit viper), this protein is Acidic phospholipase A2 S1E6-b.